Here is a 758-residue protein sequence, read N- to C-terminus: MAILNHTLGFPRVGLRRELKKAQESYWAGNSTQEELLAVGRELRARHWQQQQQAGVDLVPVGDFAWYDHVLTTSLLLGNVPARHQNADGTIDLDTLFRLGRGRAPTGEPAAAAEMTKWFNTNYHYMVPEFHKGQQFKLGWSQLLDEVDEALALGHKIKPVLLGPVTYLWLGKVKGEPFDRLSLLNDILPVYQQVLAELAKRGVEWVQIDEPALVLELPQAWLNAFKPAYDALQGQVKLLLTTYFDSVGHNLDTLRELPVQGLHVDLVGGHDDIAVLNKALPKEWLLSLGVINGRNVWRADLSNWFERLQPLVGSRPLWIGTSCSLLHSPIDLSVETRLDEEVKSWFAFALQKCGELALLSAALNAPGAAKQAELDAYSAPIRARRQSSRVHNAQVGQRLAAITAQDSERQRPYAERAQAQRERFNLPAWPTTTIGSFPQTTEIRGLRLDFKQGRLDGNNYRTSISEHIKQAIVEQERLGLDVLVHGEAERNDMVEYFGENLDGFVFTQNGWVQSYGSRCVKPPVIIGDISRPEAITVEWAKYAQSLTDKPVKGMLTGPVTILCWSFPREDVTREVIAKQIALALRDEVEDLEKAGIGIIQIDEPALREGLPLRQSDWAAYLNWAVDAFKLNAAVAKDDTQIHTHMCYCEFNDIMDSIAALDADVITIETSRSDMDLLEAFKEFEYPNEIGPGVYDIHSPNVPSVEWIEALLRKAAQNIPAERLWVNPDCGLKTRGWPETRQSLANMVLAAQRLREQQA.

5-methyltetrahydropteroyltri-L-glutamate-binding positions include 17–20 and Lys-117; that span reads RELK. Residues 434 to 436 and Glu-487 contribute to the L-homocysteine site; that span reads IGS. L-methionine contacts are provided by residues 434 to 436 and Glu-487; that span reads IGS. 5-methyltetrahydropteroyltri-L-glutamate is bound by residues 518–519 and Trp-564; that span reads RC. Residue Asp-602 coordinates L-homocysteine. Asp-602 is a binding site for L-methionine. Position 608 (Glu-608) interacts with 5-methyltetrahydropteroyltri-L-glutamate. Zn(2+) contacts are provided by His-644, Cys-646, and Glu-668. Residue His-697 is the Proton donor of the active site. A Zn(2+)-binding site is contributed by Cys-729.

This sequence belongs to the vitamin-B12 independent methionine synthase family. Zn(2+) is required as a cofactor.

It catalyses the reaction 5-methyltetrahydropteroyltri-L-glutamate + L-homocysteine = tetrahydropteroyltri-L-glutamate + L-methionine. It functions in the pathway amino-acid biosynthesis; L-methionine biosynthesis via de novo pathway; L-methionine from L-homocysteine (MetE route): step 1/1. Its function is as follows. Catalyzes the transfer of a methyl group from 5-methyltetrahydrofolate to homocysteine resulting in methionine formation. In Serratia proteamaculans (strain 568), this protein is 5-methyltetrahydropteroyltriglutamate--homocysteine methyltransferase.